The following is a 414-amino-acid chain: Dihydroorotase (414 aa).

Residues H57 and H59 each contribute to the Zn(2+) site. Substrate contacts are provided by residues 59–61 (HLR) and N91. 4 residues coordinate Zn(2+): K135, H164, H204, and D272. Residue K135 is modified to N6-carboxylysine. The active site involves D272. Substrate-binding positions include H276 and 286-287 (AG).

This sequence belongs to the metallo-dependent hydrolases superfamily. DHOase family. Class I DHOase subfamily. Zn(2+) is required as a cofactor.

It carries out the reaction (S)-dihydroorotate + H2O = N-carbamoyl-L-aspartate + H(+). It functions in the pathway pyrimidine metabolism; UMP biosynthesis via de novo pathway; (S)-dihydroorotate from bicarbonate: step 3/3. Its function is as follows. Catalyzes the reversible cyclization of carbamoyl aspartate to dihydroorotate. The protein is Dihydroorotase of Pyrococcus furiosus (strain ATCC 43587 / DSM 3638 / JCM 8422 / Vc1).